The chain runs to 141 residues: MEIRVFRQEDFEEVITLWERCDLLRPWNDPEMDIERKVNHDVSLFLVAEVSGEVVGTVMGGYDGHRGSAYYLGVHPEFRGRGIANALLNRLEKKLIARGCPKIQIMVRDDNDVVLGMYERLGYEHSDALSLGKRLIEDEEY.

The 141-residue stretch at 1-141 folds into the N-acetyltransferase domain; the sequence is MEIRVFRQED…GKRLIEDEEY (141 aa).

The protein belongs to the acetyltransferase family. YpeA subfamily.

The polypeptide is Acetyltransferase YpeA (Salmonella choleraesuis (strain SC-B67)).